A 275-amino-acid polypeptide reads, in one-letter code: Large ribosomal subunit protein uL2 (275 aa).

Residues 223 to 275 (VAMNPVDHPHGGGEGRTSGGRHPVSPWGQPTKGYKTRSNKRTDKYIVRRRNKK) are disordered.

Belongs to the universal ribosomal protein uL2 family. In terms of assembly, part of the 50S ribosomal subunit. Forms a bridge to the 30S subunit in the 70S ribosome.

Its function is as follows. One of the primary rRNA binding proteins. Required for association of the 30S and 50S subunits to form the 70S ribosome, for tRNA binding and peptide bond formation. It has been suggested to have peptidyltransferase activity; this is somewhat controversial. Makes several contacts with the 16S rRNA in the 70S ribosome. The sequence is that of Large ribosomal subunit protein uL2 from Shewanella piezotolerans (strain WP3 / JCM 13877).